The sequence spans 430 residues: S-adenosylmethionine synthase (430 aa).

His14 contributes to the ATP binding site. Asp16 lines the Mg(2+) pocket. Glu42 serves as a coordination point for K(+). Glu55 and Gln98 together coordinate L-methionine. A flexible loop region spans residues 98 to 108; sequence QSADINRGVER. Residues 164 to 166, 254 to 255, Asp263, 269 to 270, Ala286, and Lys290 each bind ATP; these read DAK, KF, and RK. Asp263 lines the L-methionine pocket. Residue Lys294 participates in L-methionine binding.

This sequence belongs to the AdoMet synthase family. Homotetramer; dimer of dimers. The cofactor is Mg(2+). K(+) serves as cofactor.

Its subcellular location is the cytoplasm. It catalyses the reaction L-methionine + ATP + H2O = S-adenosyl-L-methionine + phosphate + diphosphate. It participates in amino-acid biosynthesis; S-adenosyl-L-methionine biosynthesis; S-adenosyl-L-methionine from L-methionine: step 1/1. In terms of biological role, catalyzes the formation of S-adenosylmethionine (AdoMet) from methionine and ATP. The overall synthetic reaction is composed of two sequential steps, AdoMet formation and the subsequent tripolyphosphate hydrolysis which occurs prior to release of AdoMet from the enzyme. In Phocaeicola vulgatus (strain ATCC 8482 / DSM 1447 / JCM 5826 / CCUG 4940 / NBRC 14291 / NCTC 11154) (Bacteroides vulgatus), this protein is S-adenosylmethionine synthase.